A 119-amino-acid chain; its full sequence is Large ribosomal subunit protein uL14 (119 aa).

This sequence belongs to the universal ribosomal protein uL14 family. Part of the 50S ribosomal subunit. Forms a cluster with proteins L3 and L19. In the 70S ribosome, L14 and L19 interact and together make contacts with the 16S rRNA in bridges B5 and B8.

In terms of biological role, binds to 23S rRNA. Forms part of two intersubunit bridges in the 70S ribosome. This is Large ribosomal subunit protein uL14 from Ehrlichia ruminantium (strain Gardel).